The primary structure comprises 86 residues: Cerebrin prohormone (86 aa).

The signal sequence occupies residues 1–27 (MFGYRSLLVLLVTLSLCLLLQSSHCSA). Residues 28-64 (VRTYGNDLDARARREIISLAARLIKLSMYGPEDDSFV) constitute a propeptide that is removed on maturation. At I83 the chain carries Isoleucine amide.

As to expression, expressed only in cerebral ganglion.

The protein resides in the secreted. Functionally, may function as a hormone and may play a neuromodulatory role. This is Cerebrin prohormone (CBPH) from Aplysia californica (California sea hare).